A 436-amino-acid chain; its full sequence is Elongation factor 1-gamma-A (436 aa).

Positions Ala-2–Thr-87 constitute a GST N-terminal domain. Positions Thr-88–Phe-221 constitute a GST C-terminal domain. Basic and acidic residues-rich tracts occupy residues Phe-221–Lys-249 and Ser-265–Pro-278. Residues Phe-221–Pro-278 are disordered. In terms of domain architecture, EF-1-gamma C-terminal spans Ser-275–Lys-436.

As to quaternary structure, EF-1 is composed of four subunits: alpha, beta, delta, and gamma. Phosphorylated by CDK1. Post-translationally, the N-terminus is blocked.

In terms of biological role, probably plays a role in anchoring the complex to other cellular components. This is Elongation factor 1-gamma-A (eef1g-a) from Xenopus laevis (African clawed frog).